The primary structure comprises 292 residues: Ribosomal protein L11 methyltransferase (292 aa).

The S-adenosyl-L-methionine site is built by Thr144, Gly165, Asp187, and Asn229.

The protein belongs to the methyltransferase superfamily. PrmA family.

It localises to the cytoplasm. The enzyme catalyses L-lysyl-[protein] + 3 S-adenosyl-L-methionine = N(6),N(6),N(6)-trimethyl-L-lysyl-[protein] + 3 S-adenosyl-L-homocysteine + 3 H(+). Functionally, methylates ribosomal protein L11. This chain is Ribosomal protein L11 methyltransferase, found in Pseudomonas putida (strain ATCC 700007 / DSM 6899 / JCM 31910 / BCRC 17059 / LMG 24140 / F1).